Reading from the N-terminus, the 648-residue chain is RalA-binding protein 1 (648 aa).

The segment at 1–158 (MTECFLPPSS…KKSKDLTAAD (158 aa)) is disordered. The residue at position 2 (T2) is an N-acetylthreonine. A compositionally biased stretch (polar residues) spans 24–33 (LTRTPSSEEI). Residues S29, S30, and S34 each carry the phosphoserine modification. The residue at position 44 (T44) is a Phosphothreonine. Residues S48 and S62 each carry the phosphoserine modification. The segment covering 52–68 (DVLHEPPDTVSDDDKDH) has biased composition (basic and acidic residues). ATP is bound at residue 69-74 (GKKKGK). A compositionally biased stretch (basic residues) spans 69-79 (GKKKGKFKKKE). S92 and S93 each carry phosphoserine. Over residues 102–118 (KVKRSKGIHVFKKPSFS) the composition is skewed to basic residues. Residues 102 to 119 (KVKRSKGIHVFKKPSFSK) are nuclear localization signal. Positions 119–155 (KKKEKDFKIKEKPKEEKHKEEKHKEEKHKEKKSKDLT) are enriched in basic and acidic residues. Residues 154–219 (LTAADVVKQW…PAVFRECVDY (66 aa)) form a mediates association with membranes and could form transmembrane domains region. The 189-residue stretch at 192-380 (VPLVDAVERT…VVLKQVTRPL (189 aa)) folds into the Rho-GAP domain. A mediates interaction with RALA and RALB region spans residues 403-499 (RRQEFLLNCL…LTEQEELLAM (97 aa)). Residue 418-425 (GGIKDLSK) coordinates ATP. Phosphoserine occurs at positions 461 and 463. The mediates interaction with REPS1 and REPS2 stretch occupies residues 500–648 (EQFLRRQIAS…PSKDRKETPI (149 aa)). 2 disordered regions span residues 525-552 (QSRQ…EEEL) and 598-648 (RAKS…ETPI). Residues 536–552 (EEYSSDSESESEDEEEL) are compositionally biased toward acidic residues. The segment covering 629–648 (RVAKEQAKASPSKDRKETPI) has biased composition (basic and acidic residues). S638 carries the post-translational modification Phosphoserine.

In terms of assembly, interacts with the GTP-bound form of RALA (via effector domain); during mitosis, recruits RALBP1 to the mitochondrion where it promotes DNM1L phosphorylation and mitochondrial fission. Interacts with DNM1L; mediates its mitotic kinase cyclin B-CDK1-mediated phosphorylation during mitosis to promote mitochondrial fission. Interacts with the mitotic kinase cyclin B-CDK1 during mitosis. Interacts with the GTP-bound form of RALB (via effector domain). Interacts with REPS1; the interaction is direct and does not affect RALA-binding nor GTPase activator activity of RALBP1. Interacts with REPS2; the interaction is direct and does not affect RALA-binding nor GTPase activator activity of RALBP1. Interacts with EPN1, NUMB and TFAP2A during interphase and mitosis. Interacts with AP2M1; as part of the AP2 complex. Interacts with CDC42. Interacts with RAC1. Post-translationally, tyrosine-phosphorylated upon stimulation of cells with EGF. May undergo proteolytic cleavage to give peptides which reassemble to form a transporter complex. In terms of tissue distribution, ubiquitous. The highest level of expression was observed in ovaries and skeletal muscle, whereas the lowest was found in spleen, liver and peripheral blood leukocytes.

The protein resides in the cell membrane. The protein localises to the cytoplasm. It localises to the cytosol. It is found in the cytoskeleton. Its subcellular location is the spindle pole. The protein resides in the nucleus. The protein localises to the mitochondrion. The catalysed reaction is an S-substituted glutathione(in) + ATP + H2O = an S-substituted glutathione(out) + ADP + phosphate + H(+). The enzyme catalyses ATP + H2O + xenobioticSide 1 = ADP + phosphate + xenobioticSide 2.. It carries out the reaction leukotriene C4(in) + ATP + H2O = leukotriene C4(out) + ADP + phosphate + H(+). Functionally, multifunctional protein that functions as a downstream effector of RALA and RALB. As a GTPase-activating protein/GAP can inactivate CDC42 and RAC1 by stimulating their GTPase activity. As part of the Ral signaling pathway, may also regulate ligand-dependent EGF and insulin receptors-mediated endocytosis. During mitosis, may act as a scaffold protein in the phosphorylation of EPSIN/EPN1 by the mitotic kinase cyclin B-CDK1, preventing endocytosis during that phase of the cell cycle. During mitosis, also controls mitochondrial fission as an effector of RALA. Recruited to mitochondrion by RALA, acts as a scaffold to foster the mitotic kinase cyclin B-CDK1-mediated phosphorylation and activation of DNM1L. In terms of biological role, could also function as a primary ATP-dependent active transporter for glutathione conjugates of electrophiles. May also actively catalyze the efflux of a wide range of substrates including xenobiotics like doxorubicin (DOX) contributing to cell multidrug resistance. The chain is RalA-binding protein 1 from Mus musculus (Mouse).